The primary structure comprises 330 residues: MFKNKLAVLFTCLSVFSFSAQSGSFDTVTLGSKGGIQDGNLTAFLIKSEADSNFVMLDAGSVVNGLIVSEQKGAFKDITVPDSSPYTKVGYLLKDRIKGYFISHAHLDHVAGLIISSPDDSKKPIYGLAATNKDLMKNYFNWSAWPNFGNKGEGFKLNKYNYVDLQPGVWSPVAETTMSVVSLPLSHSGGQSTVFILKDSEGDVFAYFGDTGPDEVEKSSAMRTAWSVLAPFVKQGKLKGIIIEVSFTNETPDKSLFGHLTPNWLVKELSVLEDMNGKGSLKDLNVAISHIKYSLKNSEDPKVIIKKQLVEVNDLGVNFIFPEQGDSLQF.

A signal peptide spans 1-22; it reads MFKNKLAVLFTCLSVFSFSAQS.

Belongs to the cyclic nucleotide phosphodiesterase class-II family.

It is found in the periplasm. It carries out the reaction a nucleoside 3',5'-cyclic phosphate + H2O = a nucleoside 5'-phosphate + H(+). In terms of biological role, seems to allow the organism to grow on cAMP. In Aliivibrio fischeri (Vibrio fischeri), this protein is 3',5'-cyclic-nucleotide phosphodiesterase (cpdP).